The chain runs to 443 residues: Spermidine hydroxycinnamoyltransferase 1 (443 aa).

Catalysis depends on proton acceptor residues histidine 167 and aspartate 390.

The protein belongs to the plant acyltransferase family.

Hydroxycinnamoyl transferase that catalyzes the transfer of an acyl from p-coumaryol-CoA to spermidine, to produce coumaroyl spermidine. Can use feruloyl-CoA as acyl donor. Contributes to the natural variation of spermidine-based phenolamides in rice cultivars. The protein is Spermidine hydroxycinnamoyltransferase 1 of Oryza sativa subsp. japonica (Rice).